The primary structure comprises 615 residues: TANK-binding kinase 1-binding protein 1 (615 aa).

The segment at 1–279 is homodimerization; sequence MESMFEDDIS…QDLASNQSER (279 aa). Residues 48–162 are a coiled coil; the sequence is YGDIKERLGG…ALVETHLRQI (115 aa). Phosphoserine is present on Ser-184. Positions 221–276 form a coiled coil; it reads VSDLERRRLEEALEAAQGEARGAQLREEQLQAECERLQGELKQLQETRAQDLASNQ. Residues 280 to 329 form an interaction with TBK1 and IKBKE region; sequence DMAWVKRVGDDQVNLALAYTELTEELGRLRELSSLQGRILRTLLQEQARS. Residues 326-458 are disordered; sequence QARSGGQRHS…SHHVKAGFQG (133 aa). Residues 345–365 show a composition bias toward pro residues; the sequence is PQCPSPSPPARAAPPCPPCQS. A phosphoserine mark is found at Ser-365, Ser-372, Ser-379, Ser-385, Ser-400, and Ser-415. The segment covering 389–406 has biased composition (pro residues); it reads PSCPSPVPQRRSPVPPSC. Over residues 416 to 435 the composition is skewed to pro residues; the sequence is PVPPSCPAPQPRPPPPPPPG. Ser-504 and Ser-534 each carry phosphoserine. The UBZ1-type zinc-finger motif lies at 583–609; that stretch reads IRSCPLCQLGFPVGYPDDALIKHIDSH. 4 residues coordinate Zn(2+): Cys-586, Cys-589, His-605, and His-609.

In terms of assembly, homodimer. May form a heterodimer with NAP1. Interacts with TKB1 and IKBKE. Weakly interacts with DDX3X. As to quaternary structure, (Microbial infection) Interacts with vaccinia virus protein C6. In terms of tissue distribution, detected in leukocytes, lung, placenta, small intestine, liver, kidney, spleen, muscle, heart, brain and at low levels in thymus.

Functionally, adapter protein which constitutively binds TBK1 and IKBKE playing a role in antiviral innate immunity. In Homo sapiens (Human), this protein is TANK-binding kinase 1-binding protein 1.